A 65-amino-acid chain; its full sequence is Large ribosomal subunit protein uL30 (65 aa).

It belongs to the universal ribosomal protein uL30 family. Part of the 50S ribosomal subunit.

The protein is Large ribosomal subunit protein uL30 of Mesorhizobium japonicum (strain LMG 29417 / CECT 9101 / MAFF 303099) (Mesorhizobium loti (strain MAFF 303099)).